Here is a 310-residue protein sequence, read N- to C-terminus: Cytochrome f (310 aa).

Residues 1–27 (MRRHLSLFLGSLVIGLALLIAPAASWA) form the signal peptide. Residues Tyr28, Cys48, Cys51, and His52 each contribute to the heme site. The helical transmembrane segment at 277–297 (IYGLLAFFAAVALAQIMLVLK) threads the bilayer.

This sequence belongs to the cytochrome f family. The 4 large subunits of the cytochrome b6-f complex are cytochrome b6, subunit IV (17 kDa polypeptide, PetD), cytochrome f and the Rieske protein, while the 4 small subunits are PetG, PetL, PetM and PetN. The complex functions as a dimer. Requires heme as cofactor.

Its subcellular location is the cellular thylakoid membrane. Functionally, component of the cytochrome b6-f complex, which mediates electron transfer between photosystem II (PSII) and photosystem I (PSI), cyclic electron flow around PSI, and state transitions. The sequence is that of Cytochrome f from Synechococcus sp. (strain CC9605).